We begin with the raw amino-acid sequence, 63 residues long: Alpha-conotoxin-like Am1.6 (63 aa).

The N-terminal stretch at 1–21 (MGMRMMFTVFLLVVLATTVVS) is a signal peptide. The propeptide occupies 22 to 46 (FTSYRASDGRNAAAKASDLIALTVR). Residues 50–52 (SRP) are ser-Xaa-Pro motif, crucial for potent interaction with nAChR.

It belongs to the conotoxin A superfamily. Is not hydroxylated. Post-translationally, contains 2 disulfide bonds. In terms of tissue distribution, expressed by the venom duct.

It is found in the secreted. In terms of biological role, alpha-conotoxins act on postsynaptic membranes, they bind to the nicotinic acetylcholine receptors (nAChR) and thus inhibit them. This is Alpha-conotoxin-like Am1.6 from Conus amadis (Amadis cone).